A 258-amino-acid polypeptide reads, in one-letter code: Tryptophan synthase alpha chain (258 aa).

Residues glutamate 52 and aspartate 63 each act as proton acceptor in the active site.

This sequence belongs to the TrpA family. As to quaternary structure, tetramer of two alpha and two beta chains.

The enzyme catalyses (1S,2R)-1-C-(indol-3-yl)glycerol 3-phosphate + L-serine = D-glyceraldehyde 3-phosphate + L-tryptophan + H2O. The protein operates within amino-acid biosynthesis; L-tryptophan biosynthesis; L-tryptophan from chorismate: step 5/5. The alpha subunit is responsible for the aldol cleavage of indoleglycerol phosphate to indole and glyceraldehyde 3-phosphate. The sequence is that of Tryptophan synthase alpha chain from Streptococcus pneumoniae (strain Taiwan19F-14).